The chain runs to 441 residues: Glutamate--tRNA ligase 2 (441 aa).

The 'HIGH' region signature appears at 6–16 (PSPTGDMHIGN). The 'KMSKS' region motif lies at 231 to 235 (KMSKR). K234 provides a ligand contact to ATP.

Belongs to the class-I aminoacyl-tRNA synthetase family. Glutamate--tRNA ligase type 1 subfamily. Monomer.

It localises to the cytoplasm. The enzyme catalyses tRNA(Glu) + L-glutamate + ATP = L-glutamyl-tRNA(Glu) + AMP + diphosphate. Catalyzes the attachment of glutamate to tRNA(Glu) in a two-step reaction: glutamate is first activated by ATP to form Glu-AMP and then transferred to the acceptor end of tRNA(Glu). This chain is Glutamate--tRNA ligase 2, found in Helicobacter hepaticus (strain ATCC 51449 / 3B1).